The following is a 135-amino-acid chain: Large ribosomal subunit protein uL22c (135 aa).

This sequence belongs to the universal ribosomal protein uL22 family. In terms of assembly, part of the 50S ribosomal subunit.

The protein localises to the plastid. Functionally, this protein binds specifically to 23S rRNA. In terms of biological role, the globular domain of the protein is located near the polypeptide exit tunnel on the outside of the subunit, while an extended beta-hairpin is found that lines the wall of the exit tunnel in the center of the 70S ribosome. The polypeptide is Large ribosomal subunit protein uL22c (rpl22) (Cuscuta exaltata (Tall dodder)).